A 26-amino-acid chain; its full sequence is Phospholipase A2 homolog A1 (26 aa).

Contains 7 disulfide bonds. Expressed by the venom gland.

It localises to the secreted. The sequence is that of Phospholipase A2 homolog A1 from Micrurus pyrrhocryptus (Coral snake).